A 1127-amino-acid polypeptide reads, in one-letter code: MSSESDDKRARTRSKTLRGPPETTGADLSCPTPGCTGSGHVRGKYSRHRSLQSCPLAKKRKLEDAETEHLVSKRKSHPLRLALDEGYRMDSDGSEDAEVKDVSVSDESEGPLEEAEAEMSGQEEIHHPQTAEGKSLIKPHFDSNPTSSPSGFSKSSYSSYQGIIATSLLNLGQIAEEALVKEDSVSVAKLSPTVVHQLQDEAAMGVNSDEGEKDLFIQPEDVEEVIEVTSERSQEPCPQSLKDMVSEESSKQKGVLGHEEEGEEEEEDEEEEDEEEEEEGEEGEEEEEEEEEEEEEEDEEEEEEEEEAAPNVIFGEDTSHTSVQKASPEFRGPELSSPKPEYSVIVEVRSDDDKDEDSRSQKSAVTDESEMYDMMTRGNLGLLEQAIALKAEQVRAVCESGCPPAEQGHLGPGEPGKMAKPLDVVRKSCYSKDPSRVEKREIKCPTPGCDGTGHVTGLYPHHRSLSGCPHKDRIPPEILAMHENVLKCPTPGCTGQGHVNSNRNTHRSLSGCPIAAAEKLAKSHEKQQLQTGDPPKNNSNSDRILRPMCFVKQLEVPPYGSYRPNVAPATPRANLAKELEKFSKVTFDYASFDAQVFGKRMLAPKIQTSETSPKAFQCFDYSHDAEAAHMAATAILNLSTRCWEMPENLSTKPQDLPSKAVDIEVDENGTLDLSMHKHRKRENTFPSSSSCSSSPGVKSPDVSQRQSSTSAPSSSMTSPQSSQASRQDEWDRPLDYTKPSRLREEEPEESEPAAHSFASSEADDQEVSEENFEERKYPGEVTLTNFKLKFLSKDIKKELLTCPTPGCDGSGHITGNYASHRSLSGCPLADKSLRNLMAAHSADLKCPTPGCDGSGHITGNYASHRSLSGCPRAKKSGLKVAPTKDDKEDPELMKCPVPGCVGLGHISGKYASHRSASGCPLAARRQKEGALNGSSFSWKSLKNEGPTCPTPGCDGSGHANGSFLTHRSLSGCPRATFAGKKGKLSGDEILSPKFKTSDVLENDEEIKQLNQEIRDLNESNSEMEAAMVQLQSQISSMEKNLKNIEEENKLIEEQNEALFLELSGLSQALIQSLANIRLPHMEPICEQNFDAYVNTLTDMYSNQDCYQNPENKGLLETIKQAVRGIQV.

2 disordered regions span residues 1–157 and 204–369; these read MSSE…KSSY and MGVN…TDES. The segment at 21 to 64 adopts a CCHHC-type 1 zinc-finger fold; that stretch reads PETTGADLSCPTPGCTGSGHVRGKYSRHRSLQSCPLAKKRKLED. Cys30, Cys35, His48, and Cys54 together coordinate Zn(2+). The span at 41–50 shows a compositional bias: basic residues; the sequence is VRGKYSRHRS. 2 stretches are compositionally biased toward basic and acidic residues: residues 61-71 and 82-103; these read KLEDAETEHLV and ALDE…KDVS. A compositionally biased stretch (acidic residues) spans 104-117; it reads VSDESEGPLEEAEA. Residues 143–157 show a composition bias toward low complexity; it reads SNPTSSPSGFSKSSY. Residues 244 to 259 show a composition bias toward basic and acidic residues; it reads MVSEESSKQKGVLGHE. Positions 260–308 are enriched in acidic residues; the sequence is EEGEEEEEDEEEEDEEEEEEGEEGEEEEEEEEEEEEEEDEEEEEEEEEA. Residues 348-360 are compositionally biased toward basic and acidic residues; the sequence is VRSDDDKDEDSRS. 2 consecutive CCHHC-type zinc fingers follow at residues 435–478 and 479–522; these read SRVE…PPEI and LAMH…KLAK. Residues Cys444, Cys449, His462, Cys468, Cys488, Cys493, His506, and Cys512 each coordinate Zn(2+). 2 disordered regions span residues 520 to 542 and 670 to 776; these read LAKS…SNSD and TLDL…EERK. The span at 528–542 shows a compositional bias: polar residues; it reads QLQTGDPPKNNSNSD. Residues 703 to 725 are compositionally biased toward low complexity; that stretch reads SQRQSSTSAPSSSMTSPQSSQAS. The segment covering 726–735 has biased composition (basic and acidic residues); sequence RQDEWDRPLD. Positions 761–772 are enriched in acidic residues; sequence EADDQEVSEENF. 4 consecutive CCHHC-type zinc fingers follow at residues 793–836, 837–880, 886–929, and 939–982; these read KDIK…LRNL, MAAH…GLKV, DKED…QKEG, and KSLK…GKKG. Zn(2+)-binding residues include Cys802, Cys807, His820, Cys826, Cys846, Cys851, His864, Cys870, Cys895, Cys900, His913, Cys919, Cys948, Cys953, His966, and Cys972.

It belongs to the MYT1 family. Interacts with STEAP3. Isoform 1 is more predominant than isoform 2 at all stages of development and adulthood. Expressed in differentiated neurons especially at higher levels in newly generated ones.

Its subcellular location is the nucleus. Functionally, binds to the promoter region of genes encoding proteolipid proteins of the central nervous system. May play a role in the development of neurons and oligodendroglia in the CNS. May regulate a critical transition point in oligodendrocyte lineage development by modulating oligodendrocyte progenitor proliferation relative to terminal differentiation and up-regulation of myelin gene transcription. The polypeptide is Myelin transcription factor 1 (Myt1) (Mus musculus (Mouse)).